The sequence spans 229 residues: Urease accessory protein UreF (229 aa).

It belongs to the UreF family. UreD, UreF and UreG form a complex that acts as a GTP-hydrolysis-dependent molecular chaperone, activating the urease apoprotein by helping to assemble the nickel containing metallocenter of UreC. The UreE protein probably delivers the nickel.

Its subcellular location is the cytoplasm. Functionally, required for maturation of urease via the functional incorporation of the urease nickel metallocenter. In Staphylococcus aureus (strain JH1), this protein is Urease accessory protein UreF.